The sequence spans 353 residues: Cruciform cutting endonuclease 1, mitochondrial (353 aa).

2 residues coordinate Mg(2+): Asp293 and Asp294.

In terms of assembly, homodimer. Mg(2+) serves as cofactor.

It is found in the mitochondrion. It catalyses the reaction Endonucleolytic cleavage at a junction such as a reciprocal single-stranded crossover between two homologous DNA duplexes (Holliday junction).. In terms of biological role, capable of resolving Holliday junctions. Specific for 4-way junctions. Seems to be important for the maintenance of mitochondrial DNA. Cleaves fixed junctions at the point of strand exchange. Cleaves after 5'-CT-3' sequence. The sequence is that of Cruciform cutting endonuclease 1, mitochondrial (CCE1) from Saccharomyces cerevisiae (strain ATCC 204508 / S288c) (Baker's yeast).